A 153-amino-acid polypeptide reads, in one-letter code: Superoxide dismutase [Cu-Zn] (153 aa).

Cu cation is bound by residues histidine 45, histidine 47, and histidine 62. Cysteines 56 and 145 form a disulfide. 4 residues coordinate Zn(2+): histidine 62, histidine 70, histidine 79, and aspartate 82. Histidine 119 contacts Cu cation.

This sequence belongs to the Cu-Zn superoxide dismutase family. As to quaternary structure, homodimer. Cu cation is required as a cofactor. It depends on Zn(2+) as a cofactor.

It localises to the cytoplasm. It catalyses the reaction 2 superoxide + 2 H(+) = H2O2 + O2. Destroys radicals which are normally produced within the cells and which are toxic to biological systems. The sequence is that of Superoxide dismutase [Cu-Zn] from Ceratitis capitata (Mediterranean fruit fly).